The sequence spans 475 residues: L-ornithine N(5)-monooxygenase (475 aa).

Residues 65 to 73 (ERQPEFGWH) and Q84 contribute to the FAD site. K89 contributes to the substrate binding site. V150 contacts FAD. 238-241 (GGQS) provides a ligand contact to NADP(+). Substrate contacts are provided by residues 277 to 280 (NEIF) and N307. Position 307–309 (307–309 (NYG)) interacts with NADP(+). 446 to 448 (SLL) provides a ligand contact to FAD. Substrate is bound at residue S449.

It belongs to the lysine N(6)-hydroxylase/L-ornithine N(5)-oxygenase family. As to quaternary structure, homotetramer. Requires FAD as cofactor.

The catalysed reaction is L-ornithine + NADPH + O2 = N(5)-hydroxy-L-ornithine + NADP(+) + H2O. It catalyses the reaction L-ornithine + NADH + O2 = N(5)-hydroxy-L-ornithine + NAD(+) + H2O. The protein operates within siderophore biosynthesis. In terms of biological role, L-ornithine N(5)-monooxygenase; part of the gene cluster that mediates the biosynthesis of hydroxamate-containing siderophores that play a critical role in virulence via intracellular iron acquisition during macrophage infection. SID1 catalyzes the conversion of L-ornithine to N(5)-hydroxyornithine, the first step in the biosynthesis of all hydroxamate-containing siderophores. In Ajellomyces capsulatus (Darling's disease fungus), this protein is L-ornithine N(5)-monooxygenase.